The chain runs to 388 residues: MNLHEYQAKQLFAEYGLPVSEGFACDTPQEAAEAADKIGGDMWVVKTQVHAGGRGKAGGVKLVKSKEEIKEFAQHWLGKNLVTYQTDANGQPVAKILVESCTDIANELYLGAVVDRASQRVVFMASTEGGVDIEKIAEETPELIHQAEIDPLVGAQPYQARELGFKLGLNPTQMKQFVKIFMGLAKMFEDCDFALLEINPLVITDEGNLHCLDGKIGIDGNAIYRQPKMRAFHDPSQEDEREAHAAQWELNYVALDGTVGCMVNGAGLAMGTMDIVNLHGGKPANFLDVGGGANKERVSEAFKIILSDDNVKAVLVNIFGGIVRCDMIAEGIIGAVKEVGVKVPVVVRLEGTNAELGREVLKNSGLDIIAAESLTDAATKVVAAAEGK.

Positions 9-244 (KQLFAEYGLP…PSQEDEREAH (236 aa)) constitute an ATP-grasp domain. Residues K46, 53–55 (GRG), E99, T102, and E107 contribute to the ATP site. Positions 199 and 213 each coordinate Mg(2+). Residues N264 and 321-323 (GIV) contribute to the substrate site.

It belongs to the succinate/malate CoA ligase beta subunit family. In terms of assembly, heterotetramer of two alpha and two beta subunits. Requires Mg(2+) as cofactor.

The enzyme catalyses succinate + ATP + CoA = succinyl-CoA + ADP + phosphate. The catalysed reaction is GTP + succinate + CoA = succinyl-CoA + GDP + phosphate. It functions in the pathway carbohydrate metabolism; tricarboxylic acid cycle; succinate from succinyl-CoA (ligase route): step 1/1. Succinyl-CoA synthetase functions in the citric acid cycle (TCA), coupling the hydrolysis of succinyl-CoA to the synthesis of either ATP or GTP and thus represents the only step of substrate-level phosphorylation in the TCA. The beta subunit provides nucleotide specificity of the enzyme and binds the substrate succinate, while the binding sites for coenzyme A and phosphate are found in the alpha subunit. The chain is Succinate--CoA ligase [ADP-forming] subunit beta from Colwellia psychrerythraea (strain 34H / ATCC BAA-681) (Vibrio psychroerythus).